We begin with the raw amino-acid sequence, 131 residues long: UPF0102 protein YraN (131 aa).

The segment covering methionine 1–threonine 19 has biased composition (polar residues). Positions methionine 1–glycine 20 are disordered.

This sequence belongs to the UPF0102 family.

This chain is UPF0102 protein YraN, found in Escherichia coli O8 (strain IAI1).